The sequence spans 198 residues: MSTKGAAFLKEYKIVMVGDGGVGKSAMTIQFIQSTFVDEYDPTIEDSYRKQCLIDSECAMLDILDTAGQEEYSAMRERFMRNGEGFVLIYSITSYHTFEQVQKLHEQIARVKDLEHFPMVLVGNKCDLEQDRQVPTSAGRDLAKQYNCQFFEASAKQNVRIQDAFHGLVREIRRSQQEKCKKQKQYDEKQASLCCIVM.

18 to 25 (GDGGVGKS) provides a ligand contact to GTP. The short motif at 40–48 (YDPTIEDSY) is the Effector region element. Residues 65–69 (DTAGQ) and 124–127 (NKCD) contribute to the GTP site. Cysteine 195 is modified (cysteine methyl ester). Cysteine 195 carries the S-farnesyl cysteine lipid modification. Residues 196–198 (IVM) constitute a propeptide, removed in mature form.

Belongs to the small GTPase superfamily. Ras family.

It localises to the cell membrane. The catalysed reaction is GTP + H2O = GDP + phosphate + H(+). Alternates between an inactive form bound to GDP and an active form bound to GTP. Activated by a guanine nucleotide-exchange factor (GEF) and inactivated by a GTPase-activating protein (GAP). This chain is Ras-like protein 2 (RAS2), found in Mucor circinelloides f. lusitanicus (Mucor racemosus var. lusitanicus).